A 65-amino-acid polypeptide reads, in one-letter code: MRFSNCFNKFKFCIGTEKKYSFPICTSTYTSFSLFACIWSIFIHISLNKSFIYQKSWYYSFFQNR.

The Cytoplasmic portion of the chain corresponds to 1-20 (MRFSNCFNKFKFCIGTEKKY). A helical membrane pass occupies residues 21–43 (SFPICTSTYTSFSLFACIWSIFI). Over 44–65 (HISLNKSFIYQKSWYYSFFQNR) the chain is Extracellular.

It localises to the host membrane. This is an uncharacterized protein from Acidianus sp. F28 (AFV-2).